The following is a 532-amino-acid chain: MFTDLLHSSYFSLFLIVALGFMLGRIKIKGLSLDVSAVIFIALLFGHFGVIIPKELGNFGLVLFIFTIGIQAGPGFFDSFRSKGKTLILITMLIICSACLTAVGLKYAFDIDTPSVVGLIAGALTSTPGLAVAIDSTHSPLASIAYGIAYPFGVIGVILFVKLLPKIMRVNLDQEARRLEIERRGQFPELGTCIYRVTNASVFNRSLMQINARAMTGAVISRLKHKDEISIPTAHTVLHEGDYIQAVGSEESLNQLSVLIGEREEGELPLDKTQEIESLLLTKKDMINKQLGDLNLQKNFGCTVTRVRRSGIDLSPSPDLALKFGDKLMVVGEKEGIKGVARLLGNNAKKLSDTDFFPIAMGIVLGVLFGKLNISFSDTLSFSPGLTGGVLMVALVLSAVGKTGPIIWSMSGPANQLLRQLGLLLFLAEVGTSAGKNLVATFQESGLLMFGVGAAITVVPMLVAVIVGRLVFKINILDLLGTITGGMTSTPGLAAADSMVDSNIPSVAYATVYPIAMVFLILFIQVISSAVY.

Transmembrane regions (helical) follow at residues 7–26 (HSSY…LGRI), 30–52 (GLSL…GVII), 59–77 (FGLV…PGFF), 87–109 (LILI…KYAF), 116–134 (VVGL…AVAI), and 139–161 (SPLA…ILFV). 2 consecutive RCK C-terminal domains span residues 179–262 (LEIE…LIGE) and 263–346 (REEG…LLGN). The next 6 membrane-spanning stretches (helical) occupy residues 356 to 376 (FFPI…NISF), 386 to 408 (LTGG…PIIW), 421 to 440 (LGLL…NLVA), 445 to 467 (SGLL…AVIV), 474 to 496 (INIL…LAAA), and 506 to 528 (SVAY…QVIS).

The protein belongs to the AAE transporter (TC 2.A.81) family.

The protein localises to the cell membrane. This is an uncharacterized protein from Bacteroides thetaiotaomicron (strain ATCC 29148 / DSM 2079 / JCM 5827 / CCUG 10774 / NCTC 10582 / VPI-5482 / E50).